Reading from the N-terminus, the 299-residue chain is Probable alpha-L-glutamate ligase (299 aa).

Residues 112–294 (LQLLTEQGIA…IALQMIVHIE (183 aa)) enclose the ATP-grasp domain. ATP is bound by residues Lys148, 185–186 (DF), Asp194, and 218–220 (RAN). Mg(2+) contacts are provided by Asp255, Glu267, and Asn269. 3 residues coordinate Mn(2+): Asp255, Glu267, and Asn269.

Belongs to the RimK family. It depends on Mg(2+) as a cofactor. Mn(2+) serves as cofactor.

This chain is Probable alpha-L-glutamate ligase, found in Histophilus somni (strain 129Pt) (Haemophilus somnus).